A 357-amino-acid polypeptide reads, in one-letter code: tRNA-specific 2-thiouridylase MnmA (357 aa).

ATP is bound by residues 7 to 14 (AMSGGVDS) and Met-33. Cys-101 acts as the Nucleophile in catalysis. The cysteines at positions 101 and 198 are disulfide-linked. Gly-125 contributes to the ATP binding site. Positions 148-150 (KDQ) are interaction with tRNA. The active-site Cysteine persulfide intermediate is the Cys-198.

It belongs to the MnmA/TRMU family.

It localises to the cytoplasm. The enzyme catalyses S-sulfanyl-L-cysteinyl-[protein] + uridine(34) in tRNA + AH2 + ATP = 2-thiouridine(34) in tRNA + L-cysteinyl-[protein] + A + AMP + diphosphate + H(+). Catalyzes the 2-thiolation of uridine at the wobble position (U34) of tRNA, leading to the formation of s(2)U34. In Herpetosiphon aurantiacus (strain ATCC 23779 / DSM 785 / 114-95), this protein is tRNA-specific 2-thiouridylase MnmA.